A 432-amino-acid chain; its full sequence is Enolase (432 aa).

A (2R)-2-phosphoglycerate-binding site is contributed by glutamine 167. The active-site Proton donor is the glutamate 209. 3 residues coordinate Mg(2+): aspartate 246, glutamate 289, and aspartate 316. Lysine 341, arginine 370, serine 371, and lysine 392 together coordinate (2R)-2-phosphoglycerate. Lysine 341 (proton acceptor) is an active-site residue.

This sequence belongs to the enolase family. Mg(2+) is required as a cofactor.

It is found in the cytoplasm. The protein localises to the secreted. The protein resides in the cell surface. It catalyses the reaction (2R)-2-phosphoglycerate = phosphoenolpyruvate + H2O. The protein operates within carbohydrate degradation; glycolysis; pyruvate from D-glyceraldehyde 3-phosphate: step 4/5. Its function is as follows. Catalyzes the reversible conversion of 2-phosphoglycerate (2-PG) into phosphoenolpyruvate (PEP). It is essential for the degradation of carbohydrates via glycolysis. In Thermotoga neapolitana (strain ATCC 49049 / DSM 4359 / NBRC 107923 / NS-E), this protein is Enolase.